The chain runs to 338 residues: Malate dehydrogenase, mitochondrial (338 aa).

The transit peptide at 1–24 (MLSALARPVGAALRRSFSTSAQNN) directs the protein to the mitochondrion. NAD(+) is bound by residues 31-37 (GASGGIG) and Asp-57. An O-linked (GlcNAc) serine glycan is attached at Ser-33. N6-acetyllysine; alternate is present on residues Lys-78 and Lys-91. Lys-78 and Lys-91 each carry N6-succinyllysine; alternate. Arg-104 and Arg-110 together coordinate substrate. NAD(+) is bound by residues Asn-117 and 140-142 (ISN). Asn-142 is a substrate binding site. The residue at position 165 (Lys-165) is an N6-acetyllysine. Arg-176 is a binding site for substrate. Lys-185 is modified (N6-acetyllysine; alternate). The residue at position 185 (Lys-185) is an N6-succinyllysine; alternate. His-200 functions as the Proton acceptor in the catalytic mechanism. Position 203 is an N6-succinyllysine (Lys-203). N6-acetyllysine; alternate occurs at positions 215 and 239. Lys-215 and Lys-239 each carry N6-succinyllysine; alternate. Lys-239 is subject to N6-malonyllysine; alternate. At Ser-246 the chain carries Phosphoserine. Met-251 is an NAD(+) binding site. The residue at position 269 (Lys-269) is an N6-succinyllysine. Lys-296, Lys-301, Lys-307, Lys-314, and Lys-324 each carry N6-acetyllysine; alternate. N6-succinyllysine; alternate is present on residues Lys-296, Lys-301, Lys-307, Lys-314, and Lys-324. Lys-307 is subject to N6-malonyllysine; alternate. At Ser-326 the chain carries Phosphoserine. N6-acetyllysine; alternate occurs at positions 328, 329, and 335. Lys-328 bears the N6-succinyllysine; alternate mark. The residue at position 329 (Lys-329) is an N6-malonyllysine; alternate. Lys-335 is subject to N6-succinyllysine; alternate.

The protein belongs to the LDH/MDH superfamily. MDH type 1 family. As to quaternary structure, homodimer. Post-translationally, acetylation is enhanced after treatment either with trichostin A (TCA) or with nicotinamide (NAM) with the appearance of tri- and tetraacetylations. Glucose also increases acetylation. As to expression, expressed in flagella of epididymal sperm.

It localises to the mitochondrion matrix. It carries out the reaction (S)-malate + NAD(+) = oxaloacetate + NADH + H(+). Enzyme activity is enhanced by acetylation. In Rattus norvegicus (Rat), this protein is Malate dehydrogenase, mitochondrial (Mdh2).